The sequence spans 695 residues: Polyribonucleotide nucleotidyltransferase (695 aa).

2 residues coordinate Mg(2+): aspartate 488 and aspartate 494. A KH domain is found at 554–613 (PKTAVIKIQTDKIRDLIGKGGETIKGIISTSSASVDVDDNGNVNIFSNDQKSFDTAMQMV). The S1 motif domain occupies 623–690 (GKVYTGKVVK…DRGRIKLSRK (68 aa)).

It belongs to the polyribonucleotide nucleotidyltransferase family. As to quaternary structure, component of the RNA degradosome, which is a multiprotein complex involved in RNA processing and mRNA degradation. It depends on Mg(2+) as a cofactor.

It is found in the cytoplasm. The enzyme catalyses RNA(n+1) + phosphate = RNA(n) + a ribonucleoside 5'-diphosphate. Functionally, involved in mRNA degradation. Catalyzes the phosphorolysis of single-stranded polyribonucleotides processively in the 3'- to 5'-direction. This Ruthia magnifica subsp. Calyptogena magnifica protein is Polyribonucleotide nucleotidyltransferase.